Consider the following 112-residue polypeptide: UPF0212 protein Mpal_1084 (112 aa).

This sequence belongs to the UPF0212 family.

The chain is UPF0212 protein Mpal_1084 from Methanosphaerula palustris (strain ATCC BAA-1556 / DSM 19958 / E1-9c).